The following is a 424-amino-acid chain: CinA-like protein (424 aa).

This sequence belongs to the CinA family.

The sequence is that of CinA-like protein from Shewanella amazonensis (strain ATCC BAA-1098 / SB2B).